Consider the following 278-residue polypeptide: Translation initiation factor IF-3, mitochondrial (278 aa).

A mitochondrion-targeting transit peptide spans 1–31; it reads MAALFLKRLTLQTVKSENSCIRCFGKHILQK. The segment at 249-278 is disordered; it reads KAYKETQETQERDTLNKDHGNDKESNVLHQ.

The protein belongs to the IF-3 family.

It localises to the mitochondrion. Functionally, IF-3 binds to the 28S ribosomal subunit and shifts the equilibrium between 55S ribosomes and their 39S and 28S subunits in favor of the free subunits, thus enhancing the availability of 28S subunits on which protein synthesis initiation begins. In Homo sapiens (Human), this protein is Translation initiation factor IF-3, mitochondrial (MTIF3).